The chain runs to 484 residues: Magnesium transporter MRS2-3 (484 aa).

Disordered regions lie at residues 1–40 and 141–186; these read MRGARPDEFNFSTNPSTPNTGQPTPTYPAGVGGGGGGRKK and TKPQ…QSLE. The span at 10 to 24 shows a compositional bias: polar residues; it reads NFSTNPSTPNTGQPT. The stretch at 203–275 forms a coiled coil; sequence ACLEAASSSL…LLDDDEDMAE (73 aa). The disordered stretch occupies residues 286-320; the sequence is LEDSSNSSMNESDTFEVDLPQGDEDDRLPPEFASE. A compositionally biased stretch (acidic residues) spans 298–311; it reads DTFEVDLPQGDEDD. The helical transmembrane segment at 416-436 threads the bilayer; it reads GVMLTTATLVMSAFIAVAGVF. The Required for magnesium transport activity motif lies at 437-439; the sequence is GMN. The helical transmembrane segment at 455-475 threads the bilayer; the sequence is FIWTVIGGSIGSICLYVGAIG.

The protein belongs to the CorA metal ion transporter (MIT) (TC 1.A.35.5) family. As to expression, expressed in the whole plant.

It is found in the membrane. In terms of biological role, magnesium transporter that may mediate the influx of magnesium. The polypeptide is Magnesium transporter MRS2-3 (MRS2-3) (Arabidopsis thaliana (Mouse-ear cress)).